Consider the following 252-residue polypeptide: Small ribosomal subunit protein eS1 (252 aa).

Belongs to the eukaryotic ribosomal protein eS1 family. As to quaternary structure, component of the small ribosomal subunit. Mature ribosomes consist of a small (40S) and a large (60S) subunit. The 40S subunit contains about 33 different proteins and 1 molecule of RNA (18S). The 60S subunit contains about 49 different proteins and 3 molecules of RNA (25S, 5.8S and 5S).

It is found in the cytoplasm. The chain is Small ribosomal subunit protein eS1 from Enterocytozoon bieneusi (strain H348) (Microsporidian parasite).